We begin with the raw amino-acid sequence, 473 residues long: ATP synthase subunit beta (473 aa).

153 to 160 (GGAGVGKT) contacts ATP.

The protein belongs to the ATPase alpha/beta chains family. F-type ATPases have 2 components, CF(1) - the catalytic core - and CF(0) - the membrane proton channel. CF(1) has five subunits: alpha(3), beta(3), gamma(1), delta(1), epsilon(1). CF(0) has three main subunits: a(1), b(2) and c(9-12). The alpha and beta chains form an alternating ring which encloses part of the gamma chain. CF(1) is attached to CF(0) by a central stalk formed by the gamma and epsilon chains, while a peripheral stalk is formed by the delta and b chains.

The protein localises to the cell inner membrane. It catalyses the reaction ATP + H2O + 4 H(+)(in) = ADP + phosphate + 5 H(+)(out). Produces ATP from ADP in the presence of a proton gradient across the membrane. The catalytic sites are hosted primarily by the beta subunits. The sequence is that of ATP synthase subunit beta from Rickettsia rickettsii (strain Iowa).